The chain runs to 317 residues: Ribonuclease Z (317 aa).

Zn(2+)-binding residues include His63, His65, Asp67, His68, His143, Asp213, and His273. Asp67 serves as the catalytic Proton acceptor.

It belongs to the RNase Z family. In terms of assembly, homodimer. Zn(2+) serves as cofactor.

The enzyme catalyses Endonucleolytic cleavage of RNA, removing extra 3' nucleotides from tRNA precursor, generating 3' termini of tRNAs. A 3'-hydroxy group is left at the tRNA terminus and a 5'-phosphoryl group is left at the trailer molecule.. Zinc phosphodiesterase, which displays some tRNA 3'-processing endonuclease activity. Probably involved in tRNA maturation, by removing a 3'-trailer from precursor tRNA. The protein is Ribonuclease Z of Methanocaldococcus jannaschii (strain ATCC 43067 / DSM 2661 / JAL-1 / JCM 10045 / NBRC 100440) (Methanococcus jannaschii).